The sequence spans 184 residues: uncharacterized protein (184 aa).

The disordered stretch occupies residues 1 to 24 (MGISDQINSNLSSQSPFTVSTNPS).

This is an uncharacterized protein from Dictyostelium discoideum (Social amoeba).